Consider the following 432-residue polypeptide: C(50) beta-cyclic carotenoids biosynthesis protein LbtBC (432 aa).

Residues 1–140 (MTSLYTTLNL…DDDEVRTPER (140 aa)) are beta-cyclase. A run of 3 helical transmembrane segments spans residues 4–24 (LYTT…LLAA), 36–56 (LIGV…FDNI), and 83–103 (FAYA…LTAS). The disordered stretch occupies residues 111 to 140 (GSPTVSGRGDALLTRAPEPGDDDEVRTPER). The segment at 141–432 (PGTPGLLTTL…IVLWSVLVWS (292 aa)) is elongase/hydratase. The next 7 membrane-spanning stretches (helical) occupy residues 170-190 (YFLA…FFLV), 252-272 (ESSL…AKGL), 277-297 (IPFL…IVGW), 299-319 (IAGA…MLWG), 350-370 (AAVW…LAAA), 374-394 (ASGA…YVGV), and 409-429 (FLVL…WSVL).

This sequence belongs to the UbiA prenyltransferase family. May form a complex with LbtA.

Its subcellular location is the cell membrane. The catalysed reaction is all-trans-lycopene + dimethylallyl diphosphate + H2O = dihydroisopentenyldehydrorhodopin + diphosphate. It catalyses the reaction isopentenyldehydrorhodopin + dimethylallyl diphosphate + H2O = dihydrobisanhydrobacterioruberin + diphosphate. Its pathway is carotenoid biosynthesis. Its function is as follows. Involved in the biosynthesis of C(50) beta-cyclic carotenoids. The elongase/hydratase domain catalyzes the elongation of lycopene by attaching a C(5) isoprene unit at C-2, as well as the hydroxylation of the previous end of the molecule. The enzyme acts at both ends of the substrate, and catalyzes the conversion of lycopene to the C(45) intermediate dihydroisopentenyldehydrorhodopin (DH-IDR) and the conversion of isopentenyldehydrorhodopin (IDR) to the C(50) carotenoid dihydrobisanhydrobacterioruberin (DH-BABR). The beta-cyclase domain may produce the C(50) beta-cyclic carotenoid C.p.450 from the C(50) carotenoid dihydrobisanhydrobacterioruberin (DH-BABR). The sequence is that of C(50) beta-cyclic carotenoids biosynthesis protein LbtBC from Dietzia sp. (strain CQ4).